The primary structure comprises 1486 residues: MIERGKFRSLTLINWNGFFARTFDLDELVTTLSGGNGAGKSTTMAAFVTALIPDLTLLHFRNTTEAGATSGSRDKGLHGKLKAGVCYSMLDTINSRHQRVVVGVRLQQVAGRDRKVDIKPFAIQGLPMSVQPTQLVTETLNERQARVLPLNELKDKLEAMEGVQFKQFNSITDYHSLMFDLGIIARRLRSASDRSKFYRLIEASLYGGISSAITRSLRDYLLPENSGVRKAFQDMEAALRENRMTLEAIRVTQSDRDLFKHLISEATNYVAADYMRHANERRVHLDKALEFRRELHTSRQQLAAEQYKHVDMARELAEHNGAEGDLEADYQAASDHLNLVQTALRQQEKIERYEADLDELQIRLEEQNEVVAEAIERQEENEARAEAAELEVDELKSQLADYQQALDVQQTRAIQYNQAIAALNRAKELCHLPDLTADSAAEWLETFQAKELEATEKMLSLEQKMSMAQTAHSQFEQAYQLVVAINGPLARNEAWDVARELLREGVDQRHLAEQVQPLRMRLSELEQRLREQQEAERLLADFCKRQGKNFDIDELEALHQELEARIASLSDSVSNAREERMALRQEQEQLQSRIQSLMQRAPVWLAAQNSLNQLSEQCGEEFTSSQDVTEYLQQLLEREREAIVERDEVGARKNAVDEEIERLSQPGGSEDQRLNALAERFGGVLLSEIYDDVSLEDAPYFSALYGPSRHAIVVPDLSQVTEHLEGLTDCPEDLYLIEGDPQSFDDSVFSVDELEKAVVVKIADRQWRYSRFPEVPLFGRAARESRIESLHAEREVLSERFATLSFDVQKTQRLHQAFSRFIGSHLAVAFESDPEAEIRQLNSRRVELERALSNHENDNQQQRIQFEQAKEGVTALNRILPRLNLLADDSLADRVDEIRERLDEAQEAARFVQQFGNQLAKLEPIVSVLQSDPEQFEQLKEDYAYSQQMQRDARQQAFALTEVVQRRAHFSYSDSAEMLSGNSDLNEKLRERLEQAEAERTRAREALRGHAAQLSQYNQVLASLKSSYDTKKELLNDLQRELQDIGVRADSGAEERARIRRDELHAQLSNNRSRRNQLEKALTFCEAEMDNLTRKLRKLERDYFEMREQVVTAKAGWCAVMRMVKDNGVERRLHRRELAYLSADDLRSMSDKALGALRLAVADNEHLRDVLRMSEDPKRPERKIQFFVAVYQHLRERIRQDIIRTDDPVEAIEQMEIELSRLTEELTSREQKLAISSRSVANIIRKTIQREQNRIRMLNQGLQNVSFGQVNSVRLNVNVRETHAMLLDVLSEQHEQHQDLFNSNRLTFSEALAKLYQRLNPQIDMGQRTPQTIGEELLDYRNYLEMEVEVNRGSDGWLRAESGALSTGEAIGTGMSILVMVVQSWEDESRRLRGKDISPCRLLFLDEAARLDARSIATLFELCERLQMQLIIAAPENISPEKGTTYKLVRKVFLNTEHVHVVGLRGFAPQLPETLPGTDEAPSQAS.

34-41 (GGNGAGKS) lines the ATP pocket. Coiled-coil stretches lie at residues 326 to 418 (LEAD…QYNQ), 444 to 480 (LETF…QAYQ), and 509 to 603 (RHLA…RAPV). Residues 666–783 (PGGSEDQRLN…EVPLFGRAAR (118 aa)) form a flexible hinge region. Coiled-coil stretches lie at residues 835 to 923 (EAEI…AKLE), 977 to 1115 (EMLS…TAKA), and 1209 to 1266 (VEAI…QNVS).

It belongs to the SMC family. MukB subfamily. In terms of assembly, homodimerization via its hinge domain. Binds to DNA via its C-terminal region. Interacts, and probably forms a ternary complex, with MukE and MukF via its C-terminal region. The complex formation is stimulated by calcium or magnesium. Interacts with tubulin-related protein FtsZ.

It is found in the cytoplasm. Its subcellular location is the nucleoid. In terms of biological role, plays a central role in chromosome condensation, segregation and cell cycle progression. Functions as a homodimer, which is essential for chromosome partition. Involved in negative DNA supercoiling in vivo, and by this means organize and compact chromosomes. May achieve or facilitate chromosome segregation by condensation DNA from both sides of a centrally located replisome during cell division. In Escherichia coli O9:H4 (strain HS), this protein is Chromosome partition protein MukB.